A 238-amino-acid chain; its full sequence is Orotidine 5'-phosphate decarboxylase (238 aa).

Residues Asp-18, Lys-40, 67–76 (DMKLLDIDNT), Thr-122, Arg-183, Gln-192, and Arg-213 contribute to the substrate site. Catalysis depends on Lys-69, which acts as the Proton donor.

The protein belongs to the OMP decarboxylase family. Type 1 subfamily. Homodimer.

The enzyme catalyses orotidine 5'-phosphate + H(+) = UMP + CO2. It participates in pyrimidine metabolism; UMP biosynthesis via de novo pathway; UMP from orotate: step 2/2. Its function is as follows. Catalyzes the decarboxylation of orotidine 5'-monophosphate (OMP) to uridine 5'-monophosphate (UMP). In Brucella abortus (strain S19), this protein is Orotidine 5'-phosphate decarboxylase.